The following is a 487-amino-acid chain: Protein nucleotidyltransferase YdiU (487 aa).

The ATP site is built by Gly-91, Gly-93, Arg-94, Lys-114, Asp-126, Gly-127, Arg-177, and Arg-184. Asp-253 functions as the Proton acceptor in the catalytic mechanism. Asn-254 and Asp-263 together coordinate Mg(2+). Position 263 (Asp-263) interacts with ATP.

It belongs to the SELO family. The cofactor is Mg(2+). Mn(2+) serves as cofactor.

The enzyme catalyses L-seryl-[protein] + ATP = 3-O-(5'-adenylyl)-L-seryl-[protein] + diphosphate. The catalysed reaction is L-threonyl-[protein] + ATP = 3-O-(5'-adenylyl)-L-threonyl-[protein] + diphosphate. It catalyses the reaction L-tyrosyl-[protein] + ATP = O-(5'-adenylyl)-L-tyrosyl-[protein] + diphosphate. It carries out the reaction L-histidyl-[protein] + UTP = N(tele)-(5'-uridylyl)-L-histidyl-[protein] + diphosphate. The enzyme catalyses L-seryl-[protein] + UTP = O-(5'-uridylyl)-L-seryl-[protein] + diphosphate. The catalysed reaction is L-tyrosyl-[protein] + UTP = O-(5'-uridylyl)-L-tyrosyl-[protein] + diphosphate. Its function is as follows. Nucleotidyltransferase involved in the post-translational modification of proteins. It can catalyze the addition of adenosine monophosphate (AMP) or uridine monophosphate (UMP) to a protein, resulting in modifications known as AMPylation and UMPylation. In Yersinia pestis (strain Pestoides F), this protein is Protein nucleotidyltransferase YdiU.